The following is a 330-amino-acid chain: Lipoyl synthase (330 aa).

The segment at 1–31 (MSDAPIATSSEVTQSPADYDPTKKQKSAEKT) is disordered. Residues 7-16 (ATSSEVTQSP) are compositionally biased toward polar residues. Positions 20 to 31 (DPTKKQKSAEKT) are enriched in basic and acidic residues. [4Fe-4S] cluster is bound by residues Cys-77, Cys-82, Cys-88, Cys-103, Cys-107, Cys-110, and Ser-317. Residues 88–306 (CFGKGTATFM…EEEAYKMGFT (219 aa)) enclose the Radical SAM core domain.

This sequence belongs to the radical SAM superfamily. Lipoyl synthase family. [4Fe-4S] cluster serves as cofactor.

The protein resides in the cytoplasm. The enzyme catalyses [[Fe-S] cluster scaffold protein carrying a second [4Fe-4S](2+) cluster] + N(6)-octanoyl-L-lysyl-[protein] + 2 oxidized [2Fe-2S]-[ferredoxin] + 2 S-adenosyl-L-methionine + 4 H(+) = [[Fe-S] cluster scaffold protein] + N(6)-[(R)-dihydrolipoyl]-L-lysyl-[protein] + 4 Fe(3+) + 2 hydrogen sulfide + 2 5'-deoxyadenosine + 2 L-methionine + 2 reduced [2Fe-2S]-[ferredoxin]. The protein operates within protein modification; protein lipoylation via endogenous pathway; protein N(6)-(lipoyl)lysine from octanoyl-[acyl-carrier-protein]: step 2/2. Functionally, catalyzes the radical-mediated insertion of two sulfur atoms into the C-6 and C-8 positions of the octanoyl moiety bound to the lipoyl domains of lipoate-dependent enzymes, thereby converting the octanoylated domains into lipoylated derivatives. This Cupriavidus metallidurans (strain ATCC 43123 / DSM 2839 / NBRC 102507 / CH34) (Ralstonia metallidurans) protein is Lipoyl synthase.